A 1543-amino-acid polypeptide reads, in one-letter code: MSGTQSTITDRFPLKKPIRHGSILNRESPTDKKQKVERSSSHDFDPTDSSSKKTKSSSEESRSEIYGLVQRCVIIQKDDNGFGLTVSGDNPVFVQSVKEDGAAMRAGVQTGDRIIKVNGTLVTHSNHLEVVKLIRSGSYVALTVQGRPPGSPQIPLADSEVEPSVTGHMSPIMTSPHSPGAAGNMERITSPVLVGEENNVVHNQKVEILRKMLQKEQERLQLLQEDYNRTATQRLLKEIQEAKKHIPQLQEQLSKATGSAQDGAVIAPSRPLGDALTLSEAEADPGDGLCRTDWSSGDASRPSSDSADSPKSSLRERSYLEEAPERSEGVQDAEPQSLVGSPSTRGAPHIIGAEDDDFGTEHEQINGQCSCFQSIELLKSRPAHLAVFLHHVVSQFDPATLLCYLYSDLYKQTNSKETRRVFLEFHQFFLDRSAHLKVPVPEEISVDLEKRRPELIPEDLHRLYIQTMQERVHPEVQRHLEDFRQKRSMGLTLAESELTKLDAERDKDRGTLEKERACAEQIVTKIEEVLMTAQAVEEERSSTMQYVILMYMKYLGVKVKEPRNLEHKRGRIGFLPKIKQSMKKDREGEEKGKRRGFPSILGPPRRPSRHDNSAIGRAMEIQKSRHPKHLSTPSSVSPEPQDPAKLRQSGVANEGTDTGYLPASSMSSATSGTALSQEGGRENDTGTKQVGEASAPGDCLDSTPRVPTTVFDFPPPLLDQVQEEECEVERVAEHGTPKPFRKFDSIAFGESQSEDEQFENDLETDPPNWQQLVSREVLLGLKPSEIKRQEVINELFYTERAHVRTLKVLDQVFYQRVSREGILSPSELRKIFSNLEDILQLHVGLNEQMKAVRKRNETSVIDHIGEDLLIWFSGPGEEKLKHAAATFCSNQPFALEMIKSRQKKDSRFHTFVQDAESNPLCRRLQLKDIIPTQMQRLTKYPLLLDNIAKYTEWPPEREKVKKAADHCRQILNYVNQAVREAENKQRLEDYQRRLDTSNLKLSEYPNVDELRNLDLTKRKMIHEGPLVWKVNRDKSIDLYTLLLEDILVLLQKQDDRLVLRCHSKILASTADSKHTFSPVIKLSTVLVRQVATDNKALFVISMSDNGAQIYELVAQTVSEKTVWQDLICRMAASVKEQSTKPIPLPQPPPCEGDNDEEEPAKLKVEHHDLSVAGLQSPDRVLGLESPLISSKPQSHSLNTPGKSAAEHLFVTATQFAKEQHANGALKEGDGGYPVTIPGPHLPVSEERWALDALRNLGLLKQLLVQQLGLTEKSTQEDWQSFSRYGPASEEVQADSGIRDLENVKACHAREGQMSFKTGTGDIATCDSPRTSTESCAAQDSVILASQDSQASNVLVMDHMILTPEMPPAEPEGGLDESGEHFFDAREAHSDDNPSEGDGAVKKEEKDVNLRISGNCLILDGYDAVQESSTDEEVASSFPLQPVTGIPAVDSSHQQQHSPQNVHPEGPVSPFTPEFLVQRHWRAMEDTCFEIQSPSCTDSQSQILEYIHKIEADLEHLKKVEESYALLCQRLAGSALPDKLSDKS.

The disordered stretch occupies residues 1–62 (MSGTQSTITD…KTKSSSEESR (62 aa)). Ser-2 is subject to N-acetylserine. The span at 28–45 (SPTDKKQKVERSSSHDFD) shows a compositional bias: basic and acidic residues. Ser-41 is subject to Phosphoserine. Residues 72–151 (CVIIQKDDNG…LTVQGRPPGS (80 aa)) enclose the PDZ domain. Residues 194-262 (VGEENNVVHN…LSKATGSAQD (69 aa)) are a coiled coil. Positions 281 to 355 (AEADPGDGLC…GAPHIIGAED (75 aa)) are disordered. Over residues 293–312 (DWSSGDASRPSSDSADSPKS) the composition is skewed to low complexity. Ser-309 is modified (phosphoserine). Residues 313–329 (SLRERSYLEEAPERSEG) are compositionally biased toward basic and acidic residues. Position 341 is a phosphoserine (Ser-341). The region spanning 367 to 558 (GQCSCFQSIE…LMYMKYLGVK (192 aa)) is the RGSL domain. Positions 574-710 (FLPKIKQSMK…DSTPRVPTTV (137 aa)) are disordered. Basic and acidic residues predominate over residues 582 to 592 (MKKDREGEEKG). Phosphoserine is present on Ser-637. Residues 663–676 (ASSMSSATSGTALS) show a composition bias toward low complexity. Phosphothreonine is present on Thr-736. The DH domain occupies 787-977 (KRQEVINELF…RQILNYVNQA (191 aa)). Residues 981–1004 (AENKQRLEDYQRRLDTSNLKLSEY) adopt a coiled-coil conformation. Positions 1019 to 1132 (KMIHEGPLVW…WQDLICRMAA (114 aa)) constitute a PH domain. Residues 1137–1158 (QSTKPIPLPQPPPCEGDNDEEE) are disordered. Residues Ser-1288, Ser-1327, and Ser-1377 each carry the phosphoserine modification. Disordered regions lie at residues 1386–1405 (EAHS…KEEK) and 1441–1468 (PVTG…GPVS). A compositionally biased stretch (polar residues) spans 1450–1460 (SSHQQQHSPQN). Residues Ser-1457 and Ser-1540 each carry the phosphoserine modification.

Interacts with GNA12 and GNA13, probably through the RGS-like domain, with RHOA, PLXNB1 and PLXNB2, and through its PDZ domain with IGF1R beta subunit. Interacts with GCSAM. Found in a complex with ARHGEF11 and ARHGEF12; binding to ARHGEF11 and ARHGEF12 enhances CDC42 GEF activity of PLEKHG4B, and PLEKHG4B, in turn, inhibits ARHGEF11- and ARHGEF12-mediated RHOA activation. As to expression, expressed in brain, predominantly in neuronal cell bodies.

The protein localises to the cytoplasm. The protein resides in the membrane. In terms of biological role, may play a role in the regulation of RhoA GTPase by guanine nucleotide-binding alpha-12 (GNA12) and alpha-13 (GNA13). Acts as guanine nucleotide exchange factor (GEF) for RhoA GTPase and may act as GTPase-activating protein (GAP) for GNA12 and GNA13. The protein is Rho guanine nucleotide exchange factor 12 (Arhgef12) of Mus musculus (Mouse).